A 100-amino-acid chain; its full sequence is Large ribosomal subunit protein bL21 (100 aa).

Belongs to the bacterial ribosomal protein bL21 family. In terms of assembly, part of the 50S ribosomal subunit. Contacts protein L20.

Functionally, this protein binds to 23S rRNA in the presence of protein L20. The sequence is that of Large ribosomal subunit protein bL21 from Mycoplasma capricolum subsp. capricolum (strain California kid / ATCC 27343 / NCTC 10154).